The sequence spans 876 residues: Liprin-beta-2 (876 aa).

A coiled-coil region spans residues Ala-101 to Val-313. Phosphoserine occurs at positions 329, 363, and 387. The tract at residues Glu-356–Leu-376 is disordered. 2 disordered regions span residues Leu-425–Thr-451 and Val-470–Ile-500. Over residues Asp-473–Leu-489 the composition is skewed to polar residues. Position 512 is a phosphoserine (Ser-512). Residues Arg-527–Ala-553 are disordered. 3 consecutive SAM domains span residues Trp-558–Lys-622, Leu-630–Asn-693, and Trp-718–Ala-783.

It belongs to the liprin family. Liprin-beta subfamily. As to quaternary structure, forms homodimers and heterodimers. In terms of tissue distribution, widely expressed.

May regulate the disassembly of focal adhesions. Did not bind receptor-like tyrosine phosphatases type 2A. The polypeptide is Liprin-beta-2 (PPFIBP2) (Homo sapiens (Human)).